The chain runs to 1056 residues: Sucrose-phosphate synthase (1056 aa).

Basic and acidic residues predominate over residues histidine 112–threonine 123. Positions histidine 112–glutamate 132 are disordered. A phosphoserine mark is found at serine 158 and serine 424. The disordered stretch occupies residues asparagine 681–serine 700.

The protein belongs to the glycosyltransferase 1 family. Homodimer or homotetramer. Phosphorylated at Ser-158 and Ser-424.

It carries out the reaction beta-D-fructose 6-phosphate + UDP-alpha-D-glucose = sucrose 6(F)-phosphate + UDP + H(+). It functions in the pathway glycan biosynthesis; sucrose biosynthesis; sucrose from D-fructose 6-phosphate and UDP-alpha-D-glucose: step 1/2. Its activity is regulated as follows. Activity is regulated by phosphorylation and moderated by concentration of metabolites and light. Its function is as follows. Plays a role in photosynthetic sucrose synthesis by catalyzing the rate-limiting step of sucrose biosynthesis from UDP-glucose and fructose- 6-phosphate. Involved in the regulation of carbon partitioning in the leaves of plants. May regulate the synthesis of sucrose and therefore play a major role as a limiting factor in the export of photoassimilates out of the leaf. Plays a role for sucrose availability that is essential for plant growth and fiber elongation. This Spinacia oleracea (Spinach) protein is Sucrose-phosphate synthase (SPS1).